The chain runs to 329 residues: Phosphate import ATP-binding protein PstB (329 aa).

Residues 83 to 325 (FEIENLNFWY…PKQKETNRYI (243 aa)) enclose the ABC transporter domain. 116-123 (GKSGCGKS) is an ATP binding site.

It belongs to the ABC transporter superfamily. Phosphate importer (TC 3.A.1.7) family. The complex is composed of two ATP-binding proteins (PstB), two transmembrane proteins (PstC and PstA) and a solute-binding protein (PstS).

Its subcellular location is the cell membrane. The enzyme catalyses phosphate(out) + ATP + H2O = ADP + 2 phosphate(in) + H(+). Functionally, part of the ABC transporter complex PstSACB involved in phosphate import. Responsible for energy coupling to the transport system. The protein is Phosphate import ATP-binding protein PstB of Mycoplasma pneumoniae (strain ATCC 29342 / M129 / Subtype 1) (Mycoplasmoides pneumoniae).